A 119-amino-acid polypeptide reads, in one-letter code: Large ribosomal subunit protein uL22 (119 aa).

The protein belongs to the universal ribosomal protein uL22 family. As to quaternary structure, part of the 50S ribosomal subunit.

In terms of biological role, this protein binds specifically to 23S rRNA; its binding is stimulated by other ribosomal proteins, e.g. L4, L17, and L20. It is important during the early stages of 50S assembly. It makes multiple contacts with different domains of the 23S rRNA in the assembled 50S subunit and ribosome. Its function is as follows. The globular domain of the protein is located near the polypeptide exit tunnel on the outside of the subunit, while an extended beta-hairpin is found that lines the wall of the exit tunnel in the center of the 70S ribosome. This chain is Large ribosomal subunit protein uL22, found in Trichodesmium erythraeum (strain IMS101).